The sequence spans 41 residues: M-factor (41 aa).

A disordered region spans residues 1 to 25; the sequence is MDSMANTVSSSVVNTGNKPSETLNK. Residues 1-29 constitute a propeptide that is removed on maturation; it reads MDSMANTVSSSVVNTGNKPSETLNKTVKN. Cysteine 38 carries the post-translational modification Cysteine methyl ester. Cysteine 38 carries S-farnesyl cysteine lipidation. A propeptide spans 39 to 41 (removed in mature form); sequence VIA.

It is found in the secreted. In terms of biological role, M-factor is a mating pheromone produced by M-type mating cells. All three mfm genes contribute to the production of M-factor. This chain is M-factor (mfm3), found in Schizosaccharomyces pombe (strain 972 / ATCC 24843) (Fission yeast).